Reading from the N-terminus, the 467-residue chain is Glutamate--tRNA ligase (467 aa).

The 'HIGH' region motif lies at 9–19; sequence PSPTGFLHIGG. A 'KMSKS' region motif is present at residues 250-254; the sequence is KLSKR. Position 253 (K253) interacts with ATP.

This sequence belongs to the class-I aminoacyl-tRNA synthetase family. Glutamate--tRNA ligase type 1 subfamily. Monomer.

The protein resides in the cytoplasm. It catalyses the reaction tRNA(Glu) + L-glutamate + ATP = L-glutamyl-tRNA(Glu) + AMP + diphosphate. In terms of biological role, catalyzes the attachment of glutamate to tRNA(Glu) in a two-step reaction: glutamate is first activated by ATP to form Glu-AMP and then transferred to the acceptor end of tRNA(Glu). In Mesomycoplasma hyopneumoniae (strain 7448) (Mycoplasma hyopneumoniae), this protein is Glutamate--tRNA ligase.